The primary structure comprises 246 residues: B-cell receptor-associated protein 31 (246 aa).

The Lumenal segment spans residues 2–6 (SLQWT). A helical membrane pass occupies residues 7–27 (AVATFLYAEVFVVLLLCIPFI). Topologically, residues 28 to 43 (SPKRWQKIFKSRLVEL) are cytoplasmic. The helical transmembrane segment at 44–64 (LVSYGNTFFVVLIVILVLLVI) threads the bilayer. The Lumenal portion of the chain corresponds to 65 to 102 (DAVREIRKYDDVTEKVNLQNNPGAMEHFHMKLFRAQRN). A helical transmembrane segment spans residues 103-123 (LYIAGFSLLLSFLLRRLVTLI). Residues 124 to 246 (SQQATLLASN…VDGPMDKKEE (123 aa)) lie on the Cytoplasmic side of the membrane. Residues 165 to 237 (GGKLDVGNAE…EEHAKLQAAV (73 aa)) are a coiled coil. The Di-lysine motif signature appears at 243–246 (KKEE).

Belongs to the BCAP29/BCAP31 family. Homodimer and heterodimer with BCAP29. Binds CASP8 (isoform 9) as a complex containing BCAP31, BCAP29, BCL2 and/or BCL2L1. Forms a complex (via C-terminus) with TOMM40 which mediates the translocation of components of the mitochondrial membrane respiratory chain NADH dehydrogenase (Complex I) from the cytosol to the mitochondria; within the complex BCAP31 interacts directly with unprocessed and processed NDUFS4 and NDUFB11. Interacts with VDAC1. Interacts with VAMP3, VAMP1 and membrane IgD immunoglobulins. Interacts with HACD2. Interacts with DNM1L; may form part of a larger protein complex at the endoplasmic reticulum-mitochondrial interface during mitochondrial fission. In terms of assembly, (Microbial infection) Interacts (via C-terminus) with HRSV membrane protein SH; this interaction is direct. Cleaved by CASP8 and other caspases. As to expression, ubiquitous. Highly expressed in neurons and discrete endocrine cells.

It is found in the endoplasmic reticulum membrane. Its subcellular location is the endoplasmic reticulum-Golgi intermediate compartment membrane. In terms of biological role, functions as a chaperone protein. Is one of the most abundant endoplasmic reticulum (ER) proteins. Plays a role in the export of secreted proteins in the ER, the recognition of abnormally folded protein and their targeting to the ER associated-degradation (ERAD). Also serves as a cargo receptor for the export of transmembrane proteins. Plays a role in the assembly of the mitochondrial membrane respiratory chain NADH dehydrogenase (Complex I) by stimulating the translocation of NDUFS4 and NDUFB11 from the cytosol to the mitochondria via interaction with TOMM40. In response to ER stress, delocalizes from the ER-mitochondria contact sites and binds BCL2. May be involved in CASP8-mediated apoptosis. The protein is B-cell receptor-associated protein 31 of Homo sapiens (Human).